The chain runs to 447 residues: Cysteine--tRNA ligase (447 aa).

Cys-28 is a binding site for Zn(2+). The 'HIGH' region motif lies at 30–40; it reads PTVYNYIHIGN. Positions 211, 236, and 240 each coordinate Zn(2+). A 'KMSKS' region motif is present at residues 268 to 272; that stretch reads KMSKS. Lys-271 contributes to the ATP binding site.

This sequence belongs to the class-I aminoacyl-tRNA synthetase family. In terms of assembly, monomer. Requires Zn(2+) as cofactor.

It is found in the cytoplasm. It catalyses the reaction tRNA(Cys) + L-cysteine + ATP = L-cysteinyl-tRNA(Cys) + AMP + diphosphate. This Streptococcus agalactiae serotype V (strain ATCC BAA-611 / 2603 V/R) protein is Cysteine--tRNA ligase.